The sequence spans 281 residues: Probable feruloyl esterase A (281 aa).

The signal sequence occupies residues 1-21; it reads MKNFFSMHAILLACSAGAGLA. 3 disulfide bridges follow: Cys-50–Cys-279, Cys-112–Cys-115, and Cys-248–Cys-255. Position 98 (Asp-98) interacts with substrate. A glycan (N-linked (GlcNAc...) asparagine) is linked at Asn-100. Tyr-101 serves as a coordination point for substrate. Residue Ser-154 is the Nucleophile of the active site. N-linked (GlcNAc...) asparagine glycosylation occurs at Asn-173. The active-site Charge relay system is Asp-215. His-268 contributes to the substrate binding site. The active-site Charge relay system is the His-268.

Belongs to the AB hydrolase superfamily. FaeA family.

The protein localises to the secreted. The enzyme catalyses feruloyl-polysaccharide + H2O = ferulate + polysaccharide.. In terms of biological role, involved in degradation of plant cell walls. Hydrolyzes the feruloyl-arabinose ester bond in arabinoxylans, and the feruloyl-galactose ester bond in pectin. This Aspergillus oryzae (strain ATCC 42149 / RIB 40) (Yellow koji mold) protein is Probable feruloyl esterase A (faeA).